Here is a 310-residue protein sequence, read N- to C-terminus: Carbamate kinase-like protein YqeA (310 aa).

Belongs to the carbamate kinase family.

The polypeptide is Carbamate kinase-like protein YqeA (yqeA) (Escherichia coli (strain K12)).